Consider the following 1264-residue polypeptide: Regulator of G-protein signaling 22 (1264 aa).

The interval 565–587 (EEFSLSQPPKSPNKSPEVKTATQ) is disordered. Polar residues predominate over residues 568 to 578 (SLSQPPKSPNK). RGS domains lie at 852–980 (KFSD…AARQ) and 1021–1145 (AFRK…TDEN). Positions 1142–1174 (TDENIMSVLERRQEYNKQKKKLAVLEDEKSGKD) form a coiled coil.

In terms of assembly, interacts with GNA11, GNA12 and GNA13. As to expression, testis-specific. Expressed in Leydig cells and spermatogenic cells from the spermatogonia to spermatid stages (at protein level).

The protein localises to the cytoplasm. It is found in the nucleus. Functionally, inhibits signal transduction by increasing the GTPase activity of G protein alpha subunits thereby driving them into their inactive GDP-bound form. This chain is Regulator of G-protein signaling 22 (RGS22), found in Homo sapiens (Human).